Here is an 84-residue protein sequence, read N- to C-terminus: Cell division topological specificity factor (84 aa).

The protein belongs to the MinE family.

Its function is as follows. Prevents the cell division inhibition by proteins MinC and MinD at internal division sites while permitting inhibition at polar sites. This ensures cell division at the proper site by restricting the formation of a division septum at the midpoint of the long axis of the cell. The sequence is that of Cell division topological specificity factor from Azotobacter vinelandii (strain DJ / ATCC BAA-1303).